Consider the following 119-residue polypeptide: Putative phosphoethanolamine transferase YjgX (119 aa).

The next 2 membrane-spanning stretches (helical) occupy residues 5 to 25 and 94 to 114; these read VFPV…VIFW and LLLS…TIPY.

The protein belongs to the phosphoethanolamine transferase family.

It localises to the cell inner membrane. The polypeptide is Putative phosphoethanolamine transferase YjgX (yjgX) (Escherichia coli (strain K12)).